A 606-amino-acid chain; its full sequence is Aspartate--tRNA(Asp/Asn) ligase (606 aa).

Residue Glu-177 participates in L-aspartate binding. An aspartate region spans residues 201–204 (QIFK). L-aspartate is bound at residue Arg-223. Residues 223–225 (RDE) and Gln-232 contribute to the ATP site. His-461 is a binding site for L-aspartate. An ATP-binding site is contributed by Glu-499. Arg-506 is an L-aspartate binding site. 551-554 (GLDR) serves as a coordination point for ATP.

It belongs to the class-II aminoacyl-tRNA synthetase family. Type 1 subfamily. Homodimer.

The protein resides in the cytoplasm. It catalyses the reaction tRNA(Asx) + L-aspartate + ATP = L-aspartyl-tRNA(Asx) + AMP + diphosphate. Aspartyl-tRNA synthetase with relaxed tRNA specificity since it is able to aspartylate not only its cognate tRNA(Asp) but also tRNA(Asn). Reaction proceeds in two steps: L-aspartate is first activated by ATP to form Asp-AMP and then transferred to the acceptor end of tRNA(Asp/Asn). The protein is Aspartate--tRNA(Asp/Asn) ligase of Prochlorococcus marinus (strain MIT 9211).